The primary structure comprises 199 residues: NAD(P)H dehydrogenase (quinone) (199 aa).

One can recognise a Flavodoxin-like domain in the interval V4–I190. Residues S10 to I15 and T78 to F80 each bind FMN. Y12 provides a ligand contact to NAD(+). W98 serves as a coordination point for substrate. FMN is bound by residues S113–G119 and H134.

It belongs to the WrbA family. FMN is required as a cofactor.

The enzyme catalyses a quinone + NADH + H(+) = a quinol + NAD(+). It catalyses the reaction a quinone + NADPH + H(+) = a quinol + NADP(+). This Bradyrhizobium diazoefficiens (strain JCM 10833 / BCRC 13528 / IAM 13628 / NBRC 14792 / USDA 110) protein is NAD(P)H dehydrogenase (quinone).